A 118-amino-acid chain; its full sequence is Iron-sulfur cluster assembly protein CyaY (118 aa).

The protein belongs to the frataxin family.

Involved in iron-sulfur (Fe-S) cluster assembly. May act as a regulator of Fe-S biogenesis. This Buchnera aphidicola subsp. Baizongia pistaciae (strain Bp) protein is Iron-sulfur cluster assembly protein CyaY.